A 445-amino-acid polypeptide reads, in one-letter code: Glycine--tRNA ligase (445 aa).

Arginine 97 and glutamate 145 together coordinate substrate. Residues 177-179 (RNE), 187-192 (FRTCEF), 262-263 (EI), and 308-311 (GLTR) each bind ATP. Position 192-196 (192-196 (FEQME)) interacts with substrate. A substrate-binding site is contributed by 304–308 (ETSAG).

This sequence belongs to the class-II aminoacyl-tRNA synthetase family. As to quaternary structure, homodimer.

It localises to the cytoplasm. The enzyme catalyses tRNA(Gly) + glycine + ATP = glycyl-tRNA(Gly) + AMP + diphosphate. Its function is as follows. Catalyzes the attachment of glycine to tRNA(Gly). The protein is Glycine--tRNA ligase of Borreliella afzelii (strain PKo) (Borrelia afzelii).